A 202-amino-acid chain; its full sequence is Small ribosomal subunit protein uS4 (202 aa).

The tract at residues 15-42 (LGDLPGLTRKAAKRSYPPGQHGQARRKR) is disordered. Residues 90-152 (NRLDNVCFRI…KCSKLLAEAN (63 aa)) form the S4 RNA-binding domain.

This sequence belongs to the universal ribosomal protein uS4 family. Part of the 30S ribosomal subunit. Contacts protein S5. The interaction surface between S4 and S5 is involved in control of translational fidelity.

Functionally, one of the primary rRNA binding proteins, it binds directly to 16S rRNA where it nucleates assembly of the body of the 30S subunit. With S5 and S12 plays an important role in translational accuracy. This chain is Small ribosomal subunit protein uS4, found in Synechococcus sp. (strain CC9311).